The sequence spans 364 residues: Probable dual-specificity RNA methyltransferase RlmN (364 aa).

The active-site Proton acceptor is the Glu-107. In terms of domain architecture, Radical SAM core spans 113-346 (HDYGNSVCVT…ATIRREQGSD (234 aa)). Cysteines 120 and 351 form a disulfide. [4Fe-4S] cluster-binding residues include Cys-127, Cys-131, and Cys-134. S-adenosyl-L-methionine is bound by residues 177-178 (GE), Ser-209, 232-234 (SLH), and Asn-308. Catalysis depends on Cys-351, which acts as the S-methylcysteine intermediate.

Belongs to the radical SAM superfamily. RlmN family. [4Fe-4S] cluster is required as a cofactor.

The protein localises to the cytoplasm. The enzyme catalyses adenosine(2503) in 23S rRNA + 2 reduced [2Fe-2S]-[ferredoxin] + 2 S-adenosyl-L-methionine = 2-methyladenosine(2503) in 23S rRNA + 5'-deoxyadenosine + L-methionine + 2 oxidized [2Fe-2S]-[ferredoxin] + S-adenosyl-L-homocysteine. It catalyses the reaction adenosine(37) in tRNA + 2 reduced [2Fe-2S]-[ferredoxin] + 2 S-adenosyl-L-methionine = 2-methyladenosine(37) in tRNA + 5'-deoxyadenosine + L-methionine + 2 oxidized [2Fe-2S]-[ferredoxin] + S-adenosyl-L-homocysteine. Its function is as follows. Specifically methylates position 2 of adenine 2503 in 23S rRNA and position 2 of adenine 37 in tRNAs. Confers resistance to some classes of antibiotics. The sequence is that of Probable dual-specificity RNA methyltransferase RlmN from Staphylococcus aureus (strain Mu3 / ATCC 700698).